Consider the following 194-residue polypeptide: Isopentenyl-diphosphate Delta-isomerase (194 aa).

Residues H35 and H42 each contribute to the Mn(2+) site. Positions 40-174 (PLHLAFSSYL…PWALSPWSVD (135 aa)) constitute a Nudix hydrolase domain. The active site involves C77. A Mn(2+)-binding site is contributed by H79. Position 97 (E97) interacts with Mg(2+). E124 and E126 together coordinate Mn(2+). E126 is an active-site residue.

It belongs to the IPP isomerase type 1 family. The cofactor is Mg(2+). It depends on Mn(2+) as a cofactor.

Its subcellular location is the cytoplasm. It carries out the reaction isopentenyl diphosphate = dimethylallyl diphosphate. The protein operates within isoprenoid biosynthesis; dimethylallyl diphosphate biosynthesis; dimethylallyl diphosphate from isopentenyl diphosphate: step 1/1. Functionally, catalyzes the 1,3-allylic rearrangement of the homoallylic substrate isopentenyl (IPP) to its highly electrophilic allylic isomer, dimethylallyl diphosphate (DMAPP). The protein is Isopentenyl-diphosphate Delta-isomerase of Frankia alni (strain DSM 45986 / CECT 9034 / ACN14a).